Consider the following 88-residue polypeptide: RQC P-site tRNA stabilizing factor (88 aa).

In terms of domain architecture, S4 RNA-binding spans Met-1–Val-60.

This sequence belongs to the RqcP family. Associates with stalled 50S ribosomal subunits. Binds to RqcH, 23S rRNA and the P-site tRNA. Does not require RqcH for association with 50S subunits.

Key component of the ribosome quality control system (RQC), a ribosome-associated complex that mediates the extraction of incompletely synthesized nascent chains from stalled ribosomes and their subsequent degradation. RqcH recruits Ala-charged tRNA, and with RqcP directs the elongation of stalled nascent chains on 50S ribosomal subunits, leading to non-templated C-terminal alanine extensions (Ala tail). The Ala tail promotes nascent chain degradation. RqcP is associated with the translocation-like movement of the peptidyl-tRNA from the A-site into the P-site. This is RQC P-site tRNA stabilizing factor from Streptococcus pneumoniae (strain ATCC BAA-255 / R6).